A 520-amino-acid polypeptide reads, in one-letter code: GMP synthase [glutamine-hydrolyzing] (520 aa).

Residues 9 to 202 (KILILDFGSQ…VRAICGCTGH (194 aa)) enclose the Glutamine amidotransferase type-1 domain. The active-site Nucleophile is Cys-86. Catalysis depends on residues His-176 and Glu-178. The region spanning 203 to 395 (WTPGQIIEDA…LGLPHQMVWR (193 aa)) is the GMPS ATP-PPase domain. Position 230-236 (230-236 (SGGVDSS)) interacts with ATP.

Homodimer.

The enzyme catalyses XMP + L-glutamine + ATP + H2O = GMP + L-glutamate + AMP + diphosphate + 2 H(+). Its pathway is purine metabolism; GMP biosynthesis; GMP from XMP (L-Gln route): step 1/1. In terms of biological role, catalyzes the synthesis of GMP from XMP. This Pelobacter propionicus (strain DSM 2379 / NBRC 103807 / OttBd1) protein is GMP synthase [glutamine-hydrolyzing].